The chain runs to 74 residues: Large ribosomal subunit protein uL29 (74 aa).

The protein belongs to the universal ribosomal protein uL29 family.

In Cyanothece sp. (strain PCC 7425 / ATCC 29141), this protein is Large ribosomal subunit protein uL29.